The sequence spans 119 residues: Divalent-cation tolerance protein CutA (119 aa).

Residues cysteine 23, histidine 90, and histidine 91 each contribute to the Cu cation site.

It belongs to the CutA family. As to quaternary structure, homotrimer. Requires Cu cation as cofactor.

Its subcellular location is the cytoplasm. Functionally, involved in resistance toward heavy metals. The protein is Divalent-cation tolerance protein CutA of Yersinia pseudotuberculosis serotype O:1b (strain IP 31758).